Consider the following 449-residue polypeptide: Anther-specific proline-rich protein APG (449 aa).

The segment covering 1–118 has biased composition (pro residues); it reads PPKPQPKPPP…KPPAPSPPKP (118 aa). The disordered stretch occupies residues 1–123; sequence PPKPQPKPPP…SPPKPQNKTI (123 aa). Residue Ser132 is the Nucleophile of the active site. Active-site residues include Asp425 and His428.

The protein belongs to the 'GDSL' lipolytic enzyme family. In terms of tissue distribution, found in anther, only in male fertile plants.

This Brassica napus (Rape) protein is Anther-specific proline-rich protein APG (APG).